A 562-amino-acid chain; its full sequence is MKKSLKGLTGLIVAFALATLLFLYWPLYQRSVPKANNDTPVDVVLIGGGIMSVTLGTYLQELQPDWKIELFERLNGIAQESSDGWNNAGTGHSAFAELNYTPELQDGTIEIKRAIKIAEQFEISREFWSHQVRHGRLPAPTEFINATPHMSFVWGEDRIEYLRKRHNALIKNPLFYGMQFSTDPAVIQQWAPLLMEGRTQDQKVAATYMPLGTDVNFGVITRDLAKHLQDSQNFALHLDHEVTALRQNPDKTWNVTVKDLNNGQERSIKSRFVFIGAGGAALKLLQLSGIPESKDYAGFPVGGQFLSFENTAITKRHNVKAYGMAESGSPPMSVPHLDARKLDGKSIVLFGPFALYSTKFLKNGSWFDLYSSVNHHNAAGMLSVGKNNIDLVKYLMKQATLTDADRHAELLKYFPNAKPTDWTLVTAGQRVQIIKRDPEKGMILQFGTEIVMDKDHTLATLLGASPGASTSPSIMLDLLAKAFPQQMKNGWETQLKKIIPSYGQHINDSPALTNKIRRMTSETLSLPYLEVPDKSATPTDPTIAPKHQHSTTHNANSEMQAL.

Positions Glu-530–Leu-562 are disordered. Over residues Thr-551–Leu-562 the composition is skewed to polar residues.

The protein belongs to the MQO family. The cofactor is FAD.

The enzyme catalyses (S)-malate + a quinone = a quinol + oxaloacetate. It participates in carbohydrate metabolism; tricarboxylic acid cycle; oxaloacetate from (S)-malate (quinone route): step 1/1. This Xylella fastidiosa (strain M12) protein is Probable malate:quinone oxidoreductase.